The chain runs to 265 residues: Type 1 encapsulin shell protein (265 aa).

FMN contacts are provided by residues Arg79–Thr81, Trp87, and Asp90–Arg94. The segment at Glu184 to Pro189 is pore-forming loop. Glu235 provides a ligand contact to FMN.

The protein belongs to the encapsulin family. Family 1 subfamily. In terms of assembly, homomultimeric. This encapsulin nanocompartment is formed by 60 subunits; monomers form 12 pentamers which assemble to form shells. There are 12 pores where the pentamers meet as well as 3-fold axis channels and dimer channels; none are larger than 3-4 Angstroms in diameter. The N-terminus of the protein is inside the shell, the C-terminus is outside. Probably 3, 4 or 5 Flp cargo decamers bind inside the encapulin nanocompartment. Requires FMN as cofactor.

The protein resides in the encapsulin nanocompartment. With respect to regulation, proteolysis activated by calcium and cobalt. Functionally, shell component of a type 1 encapsulin nanocompartment. Assembles into proteinaceous shells 23-24 nm in diameter with 2-2.5 nm thick walls. Cargo protein Flp (ferritin-like protein, probably stores iron) is targeted to the interior via its C-terminal extension; empty intact shells can be isolated in the absence of cargo protein. Fe(2+) may be able to pass though the 5-fold and dimer channels in the protein shell. In terms of biological role, protease that exhibits activity toward chymotrypsin and trypsin substrates. Probably does not have antibacterial activity. This is Type 1 encapsulin shell protein from Thermotoga maritima (strain ATCC 43589 / DSM 3109 / JCM 10099 / NBRC 100826 / MSB8).